The sequence spans 147 residues: Cytochrome c-type biogenesis protein CcmE 1 (147 aa).

Over 1-9 (MKSLKKQRR) the chain is Cytoplasmic. The helical; Signal-anchor for type II membrane protein transmembrane segment at 10–30 (IQVIILATVALVLATGLIGYA) threads the bilayer. Residues 31–147 (MRDGINFFRA…EQGVYQAPES (117 aa)) are Periplasmic-facing. Residues H123 and Y127 each contribute to the heme site.

Belongs to the CcmE/CycJ family.

Its subcellular location is the cell inner membrane. In terms of biological role, heme chaperone required for the biogenesis of c-type cytochromes. Transiently binds heme delivered by CcmC and transfers the heme to apo-cytochromes in a process facilitated by CcmF and CcmH. In Ruegeria pomeroyi (strain ATCC 700808 / DSM 15171 / DSS-3) (Silicibacter pomeroyi), this protein is Cytochrome c-type biogenesis protein CcmE 1.